A 79-amino-acid chain; its full sequence is Raniseptin-9 (79 aa).

Positions 1–22 are cleaved as a signal peptide; it reads MAFLKKSLFLVLFLGIVSLSIC. A propeptide spanning residues 23–49 is cleaved from the precursor; sequence EEEKREGEEEEKQEEENEELSEEELRE. Positions 27–46 are disordered; it reads REGEEEEKQEEENEELSEEE. Acidic residues predominate over residues 30–44; the sequence is EEEEKQEEENEELSE.

It belongs to the frog skin active peptide (FSAP) family. Dermaseptin subfamily. As to expression, expressed by the skin glands.

It localises to the secreted. Its function is as follows. Has antibacterial activity. The chain is Raniseptin-9 from Boana raniceps (Chaco tree frog).